The sequence spans 282 residues: Glycine betaine/carnitine transport permease protein GbuB (282 aa).

6 helical membrane-spanning segments follow: residues 44–64 (VFDLVPPWLFIILLVFGTFWV), 70–90 (KWGLIIFEVVGLLLIWNLDFW), 99–119 (LVLTSSLIALVIGVPLGIWMA), 140–160 (AFVYLIPAVAFFGIGMVPGVV), 220–240 (IMLALSMVVIASMIGAMGLGT), and 251–271 (AGGGFVAGIAIVIVAIILDRL). Residues 93–272 (MTQTLTLVLT…IVAIILDRLT (180 aa)) enclose the ABC transmembrane type-1 domain.

This sequence belongs to the binding-protein-dependent transport system permease family. As to quaternary structure, the complex is composed of two ATP-binding proteins (GbuA), two transmembrane proteins (GbuB) and a solute-binding protein (GbuC).

It localises to the cell membrane. Its activity is regulated as follows. The complex is activated by an osmotic gradient or by low temperature. In terms of biological role, part of the ABC transporter complex GbuABC involved in glycine betaine uptake. Responsible for the translocation of the substrate across the membrane. Involved, with BetL and OpuC, in osmoprotection and cryoprotection of Listeria. Can also uptake carnitine when carnitine is abundant in the growth medium. In Listeria monocytogenes serotype 1/2a (strain 10403S), this protein is Glycine betaine/carnitine transport permease protein GbuB (gbuB).